The primary structure comprises 366 residues: G kinase-anchoring protein 1 (366 aa).

The interval 1–95 (MASAVLSSVL…SHSVCNVQHE (95 aa)) is interaction with IRS1. Residues 20-105 (QVDSGSGSDS…LSLPNPVQKE (86 aa)) are disordered. Phosphoserine occurs at positions 23, 25, and 27. Polar residues predominate over residues 39–50 (NGKSQTLGNKST). Residues 46 to 77 (GNKSTANEKKREKRRKKKEQQQSEANELRNLA) are a coiled coil. Residue serine 106 is modified to Phosphoserine; by PKG. Coiled-coil stretches lie at residues 129-160 (DLEK…QTKV), 250-299 (LKDG…MLQE), and 326-353 (VSSL…YQGG).

Belongs to the GKAP1 family. In terms of assembly, interacts with PRKG1 and IRS1.

It localises to the golgi apparatus. Functionally, regulates insulin-dependent IRS1 tyrosine phosphorylation in adipocytes by modulating the availability of IRS1 to IR tyrosine kinase. Its association with IRS1 is required for insulin-induced translocation of SLC2A4 to the cell membrane. Involved in TNF-induced impairment of insulin-dependent IRS1 tyrosine phosphorylation. The polypeptide is G kinase-anchoring protein 1 (Gkap1) (Rattus norvegicus (Rat)).